Reading from the N-terminus, the 32-residue chain is Ribulose bisphosphate carboxylase/oxygenase activase, chloroplastic (32 aa).

The segment at 13–32 is disordered; it reads FGALREGPPTFEQPAMTIEK.

This sequence belongs to the RuBisCO activase family.

The protein resides in the plastid. It localises to the chloroplast stroma. Activation of RuBisCO (ribulose-1,5-bisphosphate carboxylase/oxygenase; EC 4.1.1.39) involves the ATP-dependent carboxylation of the epsilon-amino group of lysine leading to a carbamate structure. The chain is Ribulose bisphosphate carboxylase/oxygenase activase, chloroplastic from Populus euphratica (Euphrates poplar).